A 114-amino-acid polypeptide reads, in one-letter code: Large ribosomal subunit protein uL24 (114 aa).

This sequence belongs to the universal ribosomal protein uL24 family. In terms of assembly, part of the 50S ribosomal subunit.

One of two assembly initiator proteins, it binds directly to the 5'-end of the 23S rRNA, where it nucleates assembly of the 50S subunit. In terms of biological role, one of the proteins that surrounds the polypeptide exit tunnel on the outside of the subunit. This Acidothermus cellulolyticus (strain ATCC 43068 / DSM 8971 / 11B) protein is Large ribosomal subunit protein uL24.